The primary structure comprises 232 residues: Ribose-5-phosphate isomerase A (232 aa).

Substrate-binding positions include 31-34, 88-91, and 101-104; these read TGST, DGAD, and KGGG. E110 acts as the Proton acceptor in catalysis. Substrate is bound at residue K128.

Belongs to the ribose 5-phosphate isomerase family. In terms of assembly, homodimer.

The enzyme catalyses aldehydo-D-ribose 5-phosphate = D-ribulose 5-phosphate. Its pathway is carbohydrate degradation; pentose phosphate pathway; D-ribose 5-phosphate from D-ribulose 5-phosphate (non-oxidative stage): step 1/1. In terms of biological role, catalyzes the reversible conversion of ribose-5-phosphate to ribulose 5-phosphate. The chain is Ribose-5-phosphate isomerase A from Lactobacillus gasseri (strain ATCC 33323 / DSM 20243 / BCRC 14619 / CIP 102991 / JCM 1131 / KCTC 3163 / NCIMB 11718 / NCTC 13722 / AM63).